Consider the following 242-residue polypeptide: Ubiquinone biosynthesis O-methyltransferase (242 aa).

S-adenosyl-L-methionine is bound by residues Arg-44, Gly-64, Asp-85, and Met-129.

This sequence belongs to the methyltransferase superfamily. UbiG/COQ3 family.

The catalysed reaction is a 3-demethylubiquinol + S-adenosyl-L-methionine = a ubiquinol + S-adenosyl-L-homocysteine + H(+). It catalyses the reaction a 3-(all-trans-polyprenyl)benzene-1,2-diol + S-adenosyl-L-methionine = a 2-methoxy-6-(all-trans-polyprenyl)phenol + S-adenosyl-L-homocysteine + H(+). It functions in the pathway cofactor biosynthesis; ubiquinone biosynthesis. Functionally, O-methyltransferase that catalyzes the 2 O-methylation steps in the ubiquinone biosynthetic pathway. The chain is Ubiquinone biosynthesis O-methyltransferase from Yersinia enterocolitica serotype O:8 / biotype 1B (strain NCTC 13174 / 8081).